A 72-amino-acid chain; its full sequence is Translation initiation factor IF-1 (72 aa).

The 71-residue stretch at 2-72 (AKDDVIEVEG…TRGRITYRYK (71 aa)) folds into the S1-like domain. Tyr-60 is modified (phosphotyrosine).

The protein belongs to the IF-1 family. In terms of assembly, component of the 30S ribosomal translation pre-initiation complex which assembles on the 30S ribosome in the order IF-2 and IF-3, IF-1 and N-formylmethionyl-tRNA(fMet); mRNA recruitment can occur at any time during PIC assembly.

The protein localises to the cytoplasm. One of the essential components for the initiation of protein synthesis. Stabilizes the binding of IF-2 and IF-3 on the 30S subunit to which N-formylmethionyl-tRNA(fMet) subsequently binds. Helps modulate mRNA selection, yielding the 30S pre-initiation complex (PIC). Upon addition of the 50S ribosomal subunit IF-1, IF-2 and IF-3 are released leaving the mature 70S translation initiation complex. The protein is Translation initiation factor IF-1 of Bacillus subtilis (strain 168).